The chain runs to 170 residues: Adenine phosphoribosyltransferase (170 aa).

It belongs to the purine/pyrimidine phosphoribosyltransferase family. As to quaternary structure, homodimer.

The protein localises to the cytoplasm. It catalyses the reaction AMP + diphosphate = 5-phospho-alpha-D-ribose 1-diphosphate + adenine. Its pathway is purine metabolism; AMP biosynthesis via salvage pathway; AMP from adenine: step 1/1. Its function is as follows. Catalyzes a salvage reaction resulting in the formation of AMP, that is energically less costly than de novo synthesis. The sequence is that of Adenine phosphoribosyltransferase from Lactococcus lactis subsp. cremoris (strain MG1363).